The sequence spans 85 residues: ATP synthase subunit c (85 aa).

2 consecutive transmembrane segments (helical) span residues 20-40 (LGAGIAVFALAGVGMGLGNIF) and 65-85 (FALTEAVALFALLIAFLILFA).

The protein belongs to the ATPase C chain family. In terms of assembly, F-type ATPases have 2 components, F(1) - the catalytic core - and F(0) - the membrane proton channel. F(1) has five subunits: alpha(3), beta(3), gamma(1), delta(1), epsilon(1). F(0) has three main subunits: a(1), b(2) and c(10-14). The alpha and beta chains form an alternating ring which encloses part of the gamma chain. F(1) is attached to F(0) by a central stalk formed by the gamma and epsilon chains, while a peripheral stalk is formed by the delta and b chains.

Its subcellular location is the cell inner membrane. Functionally, f(1)F(0) ATP synthase produces ATP from ADP in the presence of a proton or sodium gradient. F-type ATPases consist of two structural domains, F(1) containing the extramembraneous catalytic core and F(0) containing the membrane proton channel, linked together by a central stalk and a peripheral stalk. During catalysis, ATP synthesis in the catalytic domain of F(1) is coupled via a rotary mechanism of the central stalk subunits to proton translocation. Key component of the F(0) channel; it plays a direct role in translocation across the membrane. A homomeric c-ring of between 10-14 subunits forms the central stalk rotor element with the F(1) delta and epsilon subunits. The chain is ATP synthase subunit c from Gluconobacter oxydans (strain 621H) (Gluconobacter suboxydans).